Reading from the N-terminus, the 85-residue chain is Protein AC4 (85 aa).

Gly2 carries the N-myristoyl glycine; by host lipid modification. Residues 44-63 (RAPMSNPTSRKTGTVSNGDC) are disordered. A compositionally biased stretch (polar residues) spans 46-62 (PMSNPTSRKTGTVSNGD).

It belongs to the geminiviridae protein AC4/C4 family.

It is found in the host cell membrane. Pathogenicity determinant. May act as a suppressor of RNA-mediated gene silencing, also known as post-transcriptional gene silencing (PTGS), a mechanism of plant viral defense that limits the accumulation of viral RNAs. The chain is Protein AC4 from Potato yellow mosaic virus (isolate Venezuela) (PYMV).